The following is a 107-amino-acid chain: MGKLTLLLLILLGWLQYSLWLGKNGVHDFVRVKDDVALQEVNNGKLKARNDQLFAEIDDLNGGQEAIEERARNELGMIKPGESFYRLVPDQSRRNASIPSTQNNAQQ.

The Cytoplasmic segment spans residues 1–3 (MGK). The helical transmembrane segment at 4–21 (LTLLLLILLGWLQYSLWL) threads the bilayer. Topologically, residues 22 to 107 (GKNGVHDFVR…IPSTQNNAQQ (86 aa)) are periplasmic. Positions 39–62 (QEVNNGKLKARNDQLFAEIDDLNG) form a coiled coil.

The protein belongs to the FtsB family. As to quaternary structure, part of a complex composed of FtsB, FtsL and FtsQ.

Its subcellular location is the cell inner membrane. Its function is as follows. Essential cell division protein. May link together the upstream cell division proteins, which are predominantly cytoplasmic, with the downstream cell division proteins, which are predominantly periplasmic. This chain is Cell division protein FtsB, found in Yersinia enterocolitica serotype O:8 / biotype 1B (strain NCTC 13174 / 8081).